Here is a 312-residue protein sequence, read N- to C-terminus: Pyrimidine-specific ribonucleoside hydrolase RihA (312 aa).

His-240 is a catalytic residue.

Belongs to the IUNH family. RihA subfamily.

Hydrolyzes cytidine or uridine to ribose and cytosine or uracil, respectively. The sequence is that of Pyrimidine-specific ribonucleoside hydrolase RihA from Citrobacter koseri (strain ATCC BAA-895 / CDC 4225-83 / SGSC4696).